A 125-amino-acid polypeptide reads, in one-letter code: Holo-[acyl-carrier-protein] synthase (125 aa).

Residues aspartate 8 and glutamate 57 each coordinate Mg(2+).

This sequence belongs to the P-Pant transferase superfamily. AcpS family. Mg(2+) serves as cofactor.

It is found in the cytoplasm. The enzyme catalyses apo-[ACP] + CoA = holo-[ACP] + adenosine 3',5'-bisphosphate + H(+). Its function is as follows. Transfers the 4'-phosphopantetheine moiety from coenzyme A to a Ser of acyl-carrier-protein. In Azoarcus sp. (strain BH72), this protein is Holo-[acyl-carrier-protein] synthase.